The following is a 639-amino-acid chain: Elongation factor 4 (639 aa).

A tr-type G domain is found at 39–221; that stretch reads TMIRNFCIIA…EIVRRVPAPV (183 aa). GTP is bound by residues 51-56 and 168-171; these read DHGKST and NKID.

This sequence belongs to the TRAFAC class translation factor GTPase superfamily. Classic translation factor GTPase family. LepA subfamily.

The protein localises to the cell membrane. It carries out the reaction GTP + H2O = GDP + phosphate + H(+). Required for accurate and efficient protein synthesis under certain stress conditions. May act as a fidelity factor of the translation reaction, by catalyzing a one-codon backward translocation of tRNAs on improperly translocated ribosomes. Back-translocation proceeds from a post-translocation (POST) complex to a pre-translocation (PRE) complex, thus giving elongation factor G a second chance to translocate the tRNAs correctly. Binds to ribosomes in a GTP-dependent manner. The chain is Elongation factor 4 from Frankia casuarinae (strain DSM 45818 / CECT 9043 / HFP020203 / CcI3).